Consider the following 72-residue polypeptide: Sperm protein associated with the nucleus on the X chromosome N1 (72 aa).

The tract at residues 1-44 (MEQPTSSINGEKRKSPCESNNENDEMQETPNRDLAPEPSLKKMK) is disordered.

It belongs to the SPAN-X family.

The chain is Sperm protein associated with the nucleus on the X chromosome N1 (SPANXN1) from Homo sapiens (Human).